The sequence spans 161 residues: Ribosome maturation factor RimP (161 aa).

This sequence belongs to the RimP family.

It localises to the cytoplasm. Its function is as follows. Required for maturation of 30S ribosomal subunits. This chain is Ribosome maturation factor RimP, found in Rickettsia massiliae (strain Mtu5).